An 806-amino-acid chain; its full sequence is Glycerol-3-phosphate acyltransferase (806 aa).

Residues 305–310 (CHRSHM) carry the HXXXXD motif motif.

It belongs to the GPAT/DAPAT family.

It localises to the cell inner membrane. The enzyme catalyses sn-glycerol 3-phosphate + an acyl-CoA = a 1-acyl-sn-glycero-3-phosphate + CoA. The protein operates within phospholipid metabolism; CDP-diacylglycerol biosynthesis; CDP-diacylglycerol from sn-glycerol 3-phosphate: step 1/3. The polypeptide is Glycerol-3-phosphate acyltransferase (Salmonella paratyphi A (strain ATCC 9150 / SARB42)).